A 227-amino-acid polypeptide reads, in one-letter code: Thiocyanate methyltransferase 1 (227 aa).

S-adenosyl-L-methionine-binding residues include Trp36, Trp40, Trp47, and Gly74. Phosphoserine is present on Ser86. S-adenosyl-L-methionine contacts are provided by residues Asp95, 123-124, and Tyr139; that span reads DV.

This sequence belongs to the class I-like SAM-binding methyltransferase superfamily. TPMT family. As to expression, expressed in shoots, leaves, stems, inflorescences, flowers and green siliques.

It carries out the reaction thiocyanate + S-adenosyl-L-methionine = methyl thiocyanate + S-adenosyl-L-homocysteine. S-adenosyl-L-methionine-dependent methyltransferase. Involved in glucosinolate metabolism and defense against phytopathogens. Highly reactive to thiocyanate (NCS(-)) derived from myrosinase-mediated hydrolysis of glucosinolates upon tissue damage. The polypeptide is Thiocyanate methyltransferase 1 (Arabidopsis thaliana (Mouse-ear cress)).